Consider the following 225-residue polypeptide: Ferric nitrobindin-like protein (225 aa).

The short motif at 78–84 (GVWRGTG) is the GXWXGXG element.

This sequence belongs to the nitrobindin family.

This chain is Ferric nitrobindin-like protein, found in Corynebacterium diphtheriae (strain ATCC 700971 / NCTC 13129 / Biotype gravis).